A 317-amino-acid polypeptide reads, in one-letter code: Pseudouridine-5'-phosphate glycosidase (317 aa).

E27 functions as the Proton donor in the catalytic mechanism. K89 and V109 together coordinate substrate. D141 provides a ligand contact to Mn(2+). 143-145 (SAD) is a substrate binding site. K162 (nucleophile) is an active-site residue.

This sequence belongs to the pseudouridine-5'-phosphate glycosidase family. Homotrimer. The cofactor is Mn(2+).

The enzyme catalyses D-ribose 5-phosphate + uracil = psi-UMP + H2O. Functionally, catalyzes the reversible cleavage of pseudouridine 5'-phosphate (PsiMP) to ribose 5-phosphate and uracil. Functions biologically in the cleavage direction, as part of a pseudouridine degradation pathway. The chain is Pseudouridine-5'-phosphate glycosidase from Sorangium cellulosum (strain So ce56) (Polyangium cellulosum (strain So ce56)).